The following is a 436-amino-acid chain: Ribulose bisphosphate carboxylase large chain (436 aa).

Substrate-binding residues include Asn-104 and Thr-154. Lys-156 (proton acceptor) is an active-site residue. Lys-158 contributes to the substrate binding site. Mg(2+) contacts are provided by Lys-182, Asp-184, and Glu-185. Lys-182 carries the N6-carboxylysine modification. The active-site Proton acceptor is His-275. 3 residues coordinate substrate: Arg-276, His-308, and Ser-360.

This sequence belongs to the RuBisCO large chain family. Type I subfamily. In terms of assembly, heterohexadecamer of 8 large chains and 8 small chains. Mg(2+) is required as a cofactor.

It localises to the plastid. It is found in the chloroplast. It carries out the reaction 2 (2R)-3-phosphoglycerate + 2 H(+) = D-ribulose 1,5-bisphosphate + CO2 + H2O. It catalyses the reaction D-ribulose 1,5-bisphosphate + O2 = 2-phosphoglycolate + (2R)-3-phosphoglycerate + 2 H(+). In terms of biological role, ruBisCO catalyzes two reactions: the carboxylation of D-ribulose 1,5-bisphosphate, the primary event in carbon dioxide fixation, as well as the oxidative fragmentation of the pentose substrate in the photorespiration process. Both reactions occur simultaneously and in competition at the same active site. The polypeptide is Ribulose bisphosphate carboxylase large chain (Euglena stellata).